A 305-amino-acid chain; its full sequence is Peroxisome assembly protein 26 (305 aa).

The Cytoplasmic portion of the chain corresponds to 1–246 (MKSDASTSAA…RRLWGSVVSH (246 aa)). The chain crosses the membrane as a helical; Signal-anchor for type II membrane protein span at residues 247 to 267 (LLSQPFRKGLLAALILCLLIL). Over 268–305 (RFDPAAPSSLPFLYQLTQLFRRIQKATLSRLYPLALRD) the chain is Peroxisomal matrix.

It belongs to the peroxin-26 family. In terms of assembly, interacts (via its cytoplasmic domain) with PEX6; interaction is direct and is ATP-dependent. Interacts with PEX1; interaction is indirect and is mediated via interaction with PEX6.

It localises to the peroxisome membrane. Its function is as follows. Peroxisomal docking factor that anchors PEX1 and PEX6 to peroxisome membranes. PEX26 is therefore required for the formation of the PEX1-PEX6 AAA ATPase complex, a complex that mediates the extraction of the PEX5 receptor from peroxisomal membrane. The polypeptide is Peroxisome assembly protein 26 (Mus musculus (Mouse)).